Consider the following 232-residue polypeptide: Protein Mis18-alpha (232 aa).

Serine 36, serine 39, and serine 40 each carry phosphoserine. The Mis18 domain occupies 79–177 (PLVFLCSGCR…SVEAIESYIL (99 aa)). 4 residues coordinate Zn(2+): cysteine 84, cysteine 87, cysteine 140, and cysteine 143. Lysine 161 is covalently cross-linked (Glycyl lysine isopeptide (Lys-Gly) (interchain with G-Cter in SUMO2)). Serine 232 carries the phosphoserine modification.

Belongs to the mis18 family. As to quaternary structure, homodimer, and heterodimer with OIP5/MIS18B. Identified in a complex containing MIS18A, OIP5/MIS18B, MIS18BP1, RBBP7 and RBBP4.

The protein localises to the nucleus. The protein resides in the chromosome. It is found in the centromere. In terms of biological role, required for recruitment of CENPA to centromeres and normal chromosome segregation during mitosis. The sequence is that of Protein Mis18-alpha (MIS18A) from Otolemur garnettii (Small-eared galago).